Here is a 277-residue protein sequence, read N- to C-terminus: Small ribosomal subunit protein uS3 (277 aa).

In terms of domain architecture, KH type-2 spans 43–111 (IRKVMNKDLE…QVQLNIFEVK (69 aa)). The segment at 216–277 (FEEQQAQQGN…EAAVEPETKE (62 aa)) is disordered. Over residues 264 to 277 (EVSKEAAVEPETKE) the composition is skewed to basic and acidic residues.

Belongs to the universal ribosomal protein uS3 family. Part of the 30S ribosomal subunit. Forms a tight complex with proteins S10 and S14.

Its function is as follows. Binds the lower part of the 30S subunit head. Binds mRNA in the 70S ribosome, positioning it for translation. This is Small ribosomal subunit protein uS3 from Bifidobacterium animalis subsp. lactis (strain AD011).